A 137-amino-acid polypeptide reads, in one-letter code: NTF2-related export protein (137 aa).

An NTF2 domain is found at Glu19–Tyr135.

Preferentially binds Ran-GTP.

The protein resides in the nucleus. Stimulator of protein export for NES-containing proteins. Also plays a role in the nuclear export of U1 snRNA, tRNA, and mRNA. The polypeptide is NTF2-related export protein (nxt-1) (Caenorhabditis elegans).